The following is a 535-amino-acid chain: MLGPCMLLLLLLLGLRLQLSLGIIPVEEENPDFWNREAAEALGAAKKLQPAQTAAKNLIIFLGDGMGVSTVTAARILKGQKKDKLGPEIPLAMDRFPYVALSKTYNVDKHVPDSGATATAYLCGVKGNFQTIGLSAAARFNQCNTTRGNEVISVMNRAKKAGKSVGVVTTTRVQHASPAGTYAHTVNRNWYSDADVPASARQEGCQDIATQLISNMDIDVILGGGRKYMFRMGTPDPEYPDDYSQGGTRLDGKNLVQEWLAKRQGARYVWNRTELMQASLDPSVTHLMGLFEPGDMKYEIHRDSTLDPSLMEMTEAALRLLSRNPRGFFLFVEGGRIDHGHHESRAYRALTETIMFDDAIERAGQLTSEEDTLSLVTADHSHVFSFGGYPLRGSSIFGLAPGKARDRKAYTVLLYGNGPGYVLKDGARPDVTESESGSPEYRQQSAVPLDEETHAGEDVAVFARGPQAHLVHGVQEQTFIAHVMAFAACLEPYTACDLAPPAGTTDAAHPGRSVVPALLPLLAGTLLLLETATAP.

The first 22 residues, 1 to 22 (MLGPCMLLLLLLLGLRLQLSLG), serve as a signal peptide directing secretion. Mg(2+) is bound at residue aspartate 64. Aspartate 64 and serine 114 together coordinate Zn(2+). Serine 114 (phosphoserine intermediate) is an active-site residue. The cysteines at positions 143 and 205 are disulfide-linked. Residue asparagine 144 is glycosylated (N-linked (GlcNAc...) asparagine). Position 177 (serine 177) interacts with Mg(2+). Residue glutamate 238 coordinates Ca(2+). Asparagine 271 is a glycosylation site (N-linked (GlcNAc...) asparagine). Positions 291, 292, and 307 each coordinate Ca(2+). Glutamate 333 contributes to the Mg(2+) binding site. Residues aspartate 338, histidine 342, aspartate 379, and histidine 380 each coordinate Zn(2+). A disordered region spans residues 425–449 (DGARPDVTESESGSPEYRQQSAVPL). The segment covering 434–446 (SESGSPEYRQQSA) has biased composition (polar residues). Histidine 454 contributes to the Zn(2+) binding site. Cysteine 489 and cysteine 496 are disulfide-bonded. Aspartate 506 is lipidated: GPI-anchor amidated aspartate. Residues 507 to 535 (AAHPGRSVVPALLPLLAGTLLLLETATAP) constitute a propeptide, removed in mature form. A helical membrane pass occupies residues 513 to 529 (SVVPALLPLLAGTLLLL).

This sequence belongs to the alkaline phosphatase family. Homodimer. Mg(2+) is required as a cofactor. The cofactor is Zn(2+). Requires Ca(2+) as cofactor. In terms of tissue distribution, detected in placenta (at protein level).

Its subcellular location is the cell membrane. The catalysed reaction is a phosphate monoester + H2O = an alcohol + phosphate. Alkaline phosphatase that can hydrolyze various phosphate compounds. The chain is Alkaline phosphatase, placental type from Homo sapiens (Human).